We begin with the raw amino-acid sequence, 482 residues long: 6-phosphogluconate dehydrogenase, decarboxylating (482 aa).

NADP(+)-binding positions include 17 to 22 (GLAVMG), 40 to 42 (NRS), 82 to 84 (VKA), and Asn110. Residues Asn110 and 136-138 (SGG) contribute to the substrate site. The active-site Proton acceptor is Lys193. 196-197 (HN) contacts substrate. The active-site Proton donor is Glu200. Substrate-binding residues include Tyr201, Lys272, Arg299, Arg457, and His463.

The protein belongs to the 6-phosphogluconate dehydrogenase family. Homodimer.

The enzyme catalyses 6-phospho-D-gluconate + NADP(+) = D-ribulose 5-phosphate + CO2 + NADPH. The protein operates within carbohydrate degradation; pentose phosphate pathway; D-ribulose 5-phosphate from D-glucose 6-phosphate (oxidative stage): step 3/3. Its function is as follows. Catalyzes the oxidative decarboxylation of 6-phosphogluconate to ribulose 5-phosphate and CO(2), with concomitant reduction of NADP to NADPH. The chain is 6-phosphogluconate dehydrogenase, decarboxylating (gnd) from Synechocystis sp. (strain ATCC 27184 / PCC 6803 / Kazusa).